Consider the following 590-residue polypeptide: Aspartate--tRNA(Asp/Asn) ligase (590 aa).

Glu175 contributes to the L-aspartate binding site. Residues 199-202 (QQYK) form an aspartate region. 2 residues coordinate L-aspartate: Arg221 and His450. Residue 221–223 (RDE) coordinates ATP. Glu484 lines the ATP pocket. An L-aspartate-binding site is contributed by Arg491. 536–539 (GVDR) serves as a coordination point for ATP.

The protein belongs to the class-II aminoacyl-tRNA synthetase family. Type 1 subfamily. Homodimer.

It is found in the cytoplasm. It carries out the reaction tRNA(Asx) + L-aspartate + ATP = L-aspartyl-tRNA(Asx) + AMP + diphosphate. Functionally, aspartyl-tRNA synthetase with relaxed tRNA specificity since it is able to aspartylate not only its cognate tRNA(Asp) but also tRNA(Asn). Reaction proceeds in two steps: L-aspartate is first activated by ATP to form Asp-AMP and then transferred to the acceptor end of tRNA(Asp/Asn). The chain is Aspartate--tRNA(Asp/Asn) ligase from Rhodopseudomonas palustris (strain HaA2).